Reading from the N-terminus, the 231-residue chain is Venom allergen 3 homolog (231 aa).

A signal peptide spans 1–21 (MSSCMLFFTVIIAGVFMGTIA). Disulfide bonds link Cys25/Cys40, Cys30/Cys124, and Cys51/Cys117. In terms of domain architecture, SCP spans 68-215 (VTLHNQLRRK…WNQQYLVCNY (148 aa)). Asn145 carries N-linked (GlcNAc...) asparagine glycosylation. Cysteines 196 and 213 form a disulfide.

This sequence belongs to the CRISP family. Expressed by the venom gland.

Its subcellular location is the secreted. The protein is Venom allergen 3 homolog of Dinoponera quadriceps (South American ant).